A 287-amino-acid polypeptide reads, in one-letter code: CRISPR-associated endoribonuclease Cas6 1 (287 aa).

It belongs to the CRISPR-associated endoribonuclease Cas6 family. In terms of assembly, part of the aCascade ribonucleoprotein complex, minimally composed of Csa2 and Cas5a, which binds crRNA. Other possible components of aCascade in strain P1 are Cas6b (SSO1437) and Csa5 (SSO1443), while SSO1399, Cas5b (SSO1400) and SSO1401 have sometimes been seen weakly associated. Csa2 is probably the major RNA-binding subunit. The Csa2-Cas5a-crRNA complex also binds target DNA homologous to crRNA, probably forming an R-loop. Purified aCascade forms a filament about 6 nm in width.

CRISPR (clustered regularly interspaced short palindromic repeat) is an adaptive immune system that provides protection against mobile genetic elements (viruses, transposable elements and conjugative plasmids). CRISPR clusters contain spacers, sequences complementary to antecedent mobile elements, and target invading nucleic acids. CRISPR clusters are transcribed and processed into CRISPR RNA (crRNA). The sequence is that of CRISPR-associated endoribonuclease Cas6 1 (cas6a) from Saccharolobus solfataricus (strain ATCC 35092 / DSM 1617 / JCM 11322 / P2) (Sulfolobus solfataricus).